Here is a 568-residue protein sequence, read N- to C-terminus: Zinc finger protein 583 (568 aa).

Residues 6-77 (LTFEDVSVNF…QKKGARDTCP (72 aa)) enclose the KRAB domain. C2H2-type zinc fingers lie at residues 211–233 (LKCS…QRIH), 239–261 (YACV…KRIH), 267–289 (YECK…QRVH), 295–317 (YQCK…QRIH), 323–345 (FECI…QRIH), 351–373 (YVCH…QRIH), 379–401 (YECK…QRVH), 407–429 (YECK…QRVH), 435–457 (YECA…QRSH), 463–485 (YICK…QRIH), 491–513 (YECN…QRIH), and 519–541 (YECK…EKVH).

This sequence belongs to the krueppel C2H2-type zinc-finger protein family.

Its subcellular location is the nucleus. May be involved in transcriptional regulation. This is Zinc finger protein 583 (Znf583) from Mus musculus (Mouse).